A 265-amino-acid chain; its full sequence is Pro-opiomelanocortin (265 aa).

The first 26 residues, 1-26, serve as a signal peptide directing secretion; sequence MPRLCSSRSGALLLALLLQASMEVRG. Cystine bridges form between cysteine 28/cysteine 50 and cysteine 34/cysteine 46. The O-linked (GalNAc...) threonine glycan is linked to threonine 71. Phenylalanine 87 carries the phenylalanine amide modification. Residues 89-138 are disordered; the sequence is RRNGSSSSGVGGAAQKREEEVAVGEGPGPRGDDAETGPREDKRSYSMEHF. Asparagine 91 carries N-linked (GlcNAc...) asparagine glycosylation. Positions 106-129 are excised as a propeptide; the sequence is EEEVAVGEGPGPRGDDAETGPRED. The span at 118-138 shows a compositional bias: basic and acidic residues; it reads RGDDAETGPREDKRSYSMEHF. Serine 132 bears the N-acetylserine; in Corticotropin mark. Valine 144 bears the Valine amide mark. The residue at position 162 (serine 162) is a Phosphoserine. Residue glutamate 173 is modified to Pyrrolidone carboxylic acid (Glu); partial. Tyrosine 200 is subject to Sulfotyrosine. The interval 209–240 is disordered; sequence EAAEKKDSGPYKMEHFRWGSPPKDKRYGGFMT. The span at 210 to 235 shows a compositional bias: basic and acidic residues; sequence AAEKKDSGPYKMEHFRWGSPPKDKRY.

This sequence belongs to the POMC family. In terms of processing, specific enzymatic cleavages at paired basic residues yield the different active peptides. In terms of tissue distribution, ACTH and MSH are produced by the pituitary gland.

It is found in the secreted. Its function is as follows. Stimulates the adrenal glands to release cortisol. Functionally, anorexigenic peptide. Increases the pigmentation of skin by increasing melanin production in melanocytes. In terms of biological role, endogenous orexigenic opiate. Endogenous opiate. This chain is Pro-opiomelanocortin (POMC), found in Bos taurus (Bovine).